We begin with the raw amino-acid sequence, 290 residues long: ATP synthase gamma chain (290 aa).

The protein belongs to the ATPase gamma chain family. In terms of assembly, F-type ATPases have 2 components, CF(1) - the catalytic core - and CF(0) - the membrane proton channel. CF(1) has five subunits: alpha(3), beta(3), gamma(1), delta(1), epsilon(1). CF(0) has three main subunits: a, b and c.

Its subcellular location is the cell inner membrane. Its function is as follows. Produces ATP from ADP in the presence of a proton gradient across the membrane. The gamma chain is believed to be important in regulating ATPase activity and the flow of protons through the CF(0) complex. This Thiobacillus denitrificans (strain ATCC 25259 / T1) protein is ATP synthase gamma chain.